The sequence spans 182 residues: MENSRVLSCQYRSSFGSSNARRIRAKSEIPAVVYGQGKDVSHLRIKSSEFNKKFAKFTDNTVLILDDGKLERCVFVKDVAENIASKLIYHIDFYEVDRNVELEKYVPIKLIGASIGVKEGGILTVLKEQVKVRSLPLDLPEFIELDLTPVNKGDSVLLKDLVLPSNVRLAENDENLEVVIIK.

The protein belongs to the bacterial ribosomal protein bL25 family. CTC subfamily. As to quaternary structure, part of the 50S ribosomal subunit; part of the 5S rRNA/L5/L18/L25 subcomplex. Contacts the 5S rRNA. Binds to the 5S rRNA independently of L5 and L18.

Functionally, this is one of the proteins that binds to the 5S RNA in the ribosome where it forms part of the central protuberance. The protein is Large ribosomal subunit protein bL25 of Borreliella burgdorferi (strain ZS7) (Borrelia burgdorferi).